A 214-amino-acid chain; its full sequence is Uridine kinase (214 aa).

Glycine 15–serine 22 serves as a coordination point for ATP.

This sequence belongs to the uridine kinase family.

It is found in the cytoplasm. It carries out the reaction uridine + ATP = UMP + ADP + H(+). The catalysed reaction is cytidine + ATP = CMP + ADP + H(+). It functions in the pathway pyrimidine metabolism; CTP biosynthesis via salvage pathway; CTP from cytidine: step 1/3. Its pathway is pyrimidine metabolism; UMP biosynthesis via salvage pathway; UMP from uridine: step 1/1. In Aeromonas hydrophila subsp. hydrophila (strain ATCC 7966 / DSM 30187 / BCRC 13018 / CCUG 14551 / JCM 1027 / KCTC 2358 / NCIMB 9240 / NCTC 8049), this protein is Uridine kinase.